The chain runs to 351 residues: GDSL esterase/lipase At3g53100 (351 aa).

The first 24 residues, 1-24 (MQKMRVSGFRVLLLVSCFFCKSKG), serve as a signal peptide directing secretion. The active-site Nucleophile is S36. 3 N-linked (GlcNAc...) asparagine glycosylation sites follow: N234, N254, and N318. Active-site residues include D326 and H329.

It belongs to the 'GDSL' lipolytic enzyme family.

The protein resides in the secreted. The polypeptide is GDSL esterase/lipase At3g53100 (Arabidopsis thaliana (Mouse-ear cress)).